Here is a 112-residue protein sequence, read N- to C-terminus: Integration host factor subunit alpha (112 aa).

The protein belongs to the bacterial histone-like protein family. Heterodimer of an alpha and a beta chain.

In terms of biological role, this protein is one of the two subunits of integration host factor, a specific DNA-binding protein that functions in genetic recombination as well as in transcriptional and translational control. The protein is Integration host factor subunit alpha of Rhizobium etli (strain ATCC 51251 / DSM 11541 / JCM 21823 / NBRC 15573 / CFN 42).